A 184-amino-acid chain; its full sequence is Uroplakin-2 (184 aa).

The N-terminal stretch at 1–25 (MAPLLPIRTLPLILILLALLSPGAA) is a signal peptide. Positions 26 to 84 (DFNISSLSGLLSPALTESLLVALPPCHLTGGNATLMVRRANDSKVVTSSFVVPPCRGRR) are excised as a propeptide. N-linked (GlcNAc...) asparagine glycans are attached at residues N28, N57, and N66. Residues 85-155 (ELVSVVDSGA…IGLGMARTGG (71 aa)) lie on the Lumenal side of the membrane. A helical transmembrane segment spans residues 156–176 (MVVITVLLSVAMFLLVLGFII). Residues 177–184 (ALALGSRK) are Cytoplasmic-facing.

Belongs to the uroplakin-2 family. As to quaternary structure, interacts with uroplakin-1a (UPK1A). Expressed in ureter.

It is found in the cell membrane. In terms of biological role, component of the asymmetric unit membrane (AUM); a highly specialized biomembrane elaborated by terminally differentiated urothelial cells. May play an important role in regulating the assembly of the AUM. This is Uroplakin-2 (UPK2) from Homo sapiens (Human).